The primary structure comprises 815 residues: (-)-kolavenyl diphosphate synthase TPS10, chloroplastic (815 aa).

The N-terminal 50 residues, 1–50 (MFMSSSSSSHARRPQLSSFSYLHPPLPFPGLSFSSTRDKRVNFDSTRIIS), are a transit peptide targeting the chloroplast. Lys247 serves as a coordination point for substrate. Mg(2+) is bound by residues Asp379 and Asp381. The DXDD motif motif lies at 379-382 (DIDD). Position 465 (Lys465) interacts with substrate.

It belongs to the terpene synthase family. Tpsc subfamily. Mg(2+) is required as a cofactor.

The protein localises to the plastid. The protein resides in the chloroplast. It carries out the reaction (2E,6E,10E)-geranylgeranyl diphosphate = (-)-kolavenyl diphosphate. With respect to regulation, inhibited by high concentrations of magnesium. Functionally, diterpene synthase that catalyzes the formation of (-)-kolavenyl diphosphate from geranylgeranyl diphosphate (GGPP). The polypeptide is (-)-kolavenyl diphosphate synthase TPS10, chloroplastic (Tripterygium wilfordii (Thunder God vine)).